The chain runs to 346 residues: UDP-N-acetylenolpyruvoylglucosamine reductase (346 aa).

Residues 23-194 (FDVRARLACR…VSVTFRLPKV (172 aa)) form the FAD-binding PCMH-type domain. Arg-170 is a catalytic residue. The active-site Proton donor is Ser-246. Glu-342 is a catalytic residue.

The protein belongs to the MurB family. It depends on FAD as a cofactor.

The protein localises to the cytoplasm. The catalysed reaction is UDP-N-acetyl-alpha-D-muramate + NADP(+) = UDP-N-acetyl-3-O-(1-carboxyvinyl)-alpha-D-glucosamine + NADPH + H(+). Its pathway is cell wall biogenesis; peptidoglycan biosynthesis. In terms of biological role, cell wall formation. This Paraburkholderia phymatum (strain DSM 17167 / CIP 108236 / LMG 21445 / STM815) (Burkholderia phymatum) protein is UDP-N-acetylenolpyruvoylglucosamine reductase.